The following is a 593-amino-acid chain: A-type ATP synthase subunit A (593 aa).

Residue G236 to T243 coordinates ATP.

This sequence belongs to the ATPase alpha/beta chains family. As to quaternary structure, has multiple subunits with at least A(3), B(3), C, D, E, F, H, I and proteolipid K(x).

The protein resides in the cell membrane. It catalyses the reaction ATP + H2O + 4 H(+)(in) = ADP + phosphate + 5 H(+)(out). In terms of biological role, component of the A-type ATP synthase that produces ATP from ADP in the presence of a proton gradient across the membrane. The A chain is the catalytic subunit. This is A-type ATP synthase subunit A from Pyrobaculum arsenaticum (strain DSM 13514 / JCM 11321 / PZ6).